A 1783-amino-acid polypeptide reads, in one-letter code: uncharacterized protein (1783 aa).

A helical membrane pass occupies residues 16-36 (FFLLFGIIFVLFSIIFLETSI). Residues 105–119 (GSDSGQSNGSGDNQN) are compositionally biased toward low complexity. Residues 105–125 (GSDSGQSNGSGDNQNKTIPRK) form a disordered region. Helical transmembrane passes span 917–937 (VSTV…ILLI), 967–987 (VFAG…AFLL), 1010–1030 (WLSF…ISWI), 1084–1104 (LFTY…AGTI), 1660–1680 (FLLG…GISM), 1709–1729 (FIPA…GVLI), 1730–1750 (GIQA…FEFL), and 1752–1772 (YMVG…YFWI).

It belongs to the ABC-4 integral membrane protein family.

The protein localises to the cell membrane. This is an uncharacterized protein from Mycoplasma genitalium (strain ATCC 33530 / DSM 19775 / NCTC 10195 / G37) (Mycoplasmoides genitalium).